A 223-amino-acid chain; its full sequence is Deoxyribose-phosphate aldolase (223 aa).

Residue Asp89 is the Proton donor/acceptor of the active site. Lys152 acts as the Schiff-base intermediate with acetaldehyde in catalysis. The Proton donor/acceptor role is filled by Lys181.

This sequence belongs to the DeoC/FbaB aldolase family. DeoC type 1 subfamily.

The protein localises to the cytoplasm. It carries out the reaction 2-deoxy-D-ribose 5-phosphate = D-glyceraldehyde 3-phosphate + acetaldehyde. Its pathway is carbohydrate degradation; 2-deoxy-D-ribose 1-phosphate degradation; D-glyceraldehyde 3-phosphate and acetaldehyde from 2-deoxy-alpha-D-ribose 1-phosphate: step 2/2. Catalyzes a reversible aldol reaction between acetaldehyde and D-glyceraldehyde 3-phosphate to generate 2-deoxy-D-ribose 5-phosphate. The protein is Deoxyribose-phosphate aldolase of Bacillus cereus (strain AH187).